Consider the following 151-residue polypeptide: Large ribosomal subunit protein bL9 (151 aa).

Belongs to the bacterial ribosomal protein bL9 family.

Its function is as follows. Binds to the 23S rRNA. This chain is Large ribosomal subunit protein bL9, found in Dehalococcoides mccartyi (strain ATCC BAA-2100 / JCM 16839 / KCTC 5957 / BAV1).